Here is a 222-residue protein sequence, read N- to C-terminus: Small ribosomal subunit protein eS1 (222 aa).

Belongs to the eukaryotic ribosomal protein eS1 family.

In Pyrobaculum calidifontis (strain DSM 21063 / JCM 11548 / VA1), this protein is Small ribosomal subunit protein eS1.